The sequence spans 743 residues: Phosphoribosylformylglycinamidine synthase subunit PurL (743 aa).

Histidine 54 is an active-site residue. 2 residues coordinate ATP: tyrosine 57 and lysine 96. Mg(2+) is bound at residue glutamate 98. Residues 99 to 102 (SHNH) and arginine 121 each bind substrate. Histidine 100 acts as the Proton acceptor in catalysis. Aspartate 122 contacts Mg(2+). Glutamine 245 serves as a coordination point for substrate. A Mg(2+)-binding site is contributed by aspartate 273. Substrate is bound at residue 317-319 (ESQ). The ATP site is built by aspartate 500 and glycine 537. Residue asparagine 538 coordinates Mg(2+). Serine 540 contributes to the substrate binding site.

It belongs to the FGAMS family. Monomer. Part of the FGAM synthase complex composed of 1 PurL, 1 PurQ and 2 PurS subunits.

The protein resides in the cytoplasm. The enzyme catalyses N(2)-formyl-N(1)-(5-phospho-beta-D-ribosyl)glycinamide + L-glutamine + ATP + H2O = 2-formamido-N(1)-(5-O-phospho-beta-D-ribosyl)acetamidine + L-glutamate + ADP + phosphate + H(+). The protein operates within purine metabolism; IMP biosynthesis via de novo pathway; 5-amino-1-(5-phospho-D-ribosyl)imidazole from N(2)-formyl-N(1)-(5-phospho-D-ribosyl)glycinamide: step 1/2. In terms of biological role, part of the phosphoribosylformylglycinamidine synthase complex involved in the purines biosynthetic pathway. Catalyzes the ATP-dependent conversion of formylglycinamide ribonucleotide (FGAR) and glutamine to yield formylglycinamidine ribonucleotide (FGAM) and glutamate. The FGAM synthase complex is composed of three subunits. PurQ produces an ammonia molecule by converting glutamine to glutamate. PurL transfers the ammonia molecule to FGAR to form FGAM in an ATP-dependent manner. PurS interacts with PurQ and PurL and is thought to assist in the transfer of the ammonia molecule from PurQ to PurL. This is Phosphoribosylformylglycinamidine synthase subunit PurL from Bacillus pumilus (strain SAFR-032).